The chain runs to 112 residues: Nucleoid-associated protein BCI_0116 (112 aa).

Belongs to the YbaB/EbfC family. In terms of assembly, homodimer.

The protein resides in the cytoplasm. Its subcellular location is the nucleoid. In terms of biological role, binds to DNA and alters its conformation. May be involved in regulation of gene expression, nucleoid organization and DNA protection. This Baumannia cicadellinicola subsp. Homalodisca coagulata protein is Nucleoid-associated protein BCI_0116.